Reading from the N-terminus, the 1589-residue chain is MLPPKHLSATKPKKSWAPNLYELDSDLTKEPDVIIGEGPTDSEFFHQRFRNLIYVEFVGPRKTLIKLRNLCLDWLQPETRTKEEIIELLVLEQYLTIIPEKLKPWVRAKKPENCEKLVTLLENYKEMYQPEDDNNSDVTSDDDMTRNRRESSPPHSVHSFSGDRDWDRRGRSRDMEPRDRWSHTRNPRSRMPQRDLSLPVVAKTSFEMDRDDDRDSRAYESRSQDAESYQNVVDLAEDRKPHNTIQDNMENYRKLLSLGVQLAEDDGHSHMTQGHSSRSKRSAYPSTSRGLKTMPEAKKSTHRRGICEDESSHGVIMEKFIKDVSRSSKSGRARESSDRSQRFPRMSDDNWKDISLNKRESVIQQRVYEGNAFRGGFRFNSTLVSRKRVLERKRRYHFDTDGKGSIHDQKGCPRKKPFECGSEMRKAMSMSSLSSLSSPSFTESQPIDFGAMPYVCDECGRSFSVISEFVEHQIMHTRENLYEYGESFIHSVAVSEVQKSQVGGKRFECKDCGETFNKSAALAEHRKIHARGYLVECKNQECEEAFMPSPTFSELQKIYGKDKFYECRVCKETFLHSSALIEHQKIHFGDDKDNEREHERERERGETFRPSPALNEFQKMYGKEKMYECKVCGETFLHSSSLKEHQKIHTRGNPFENKGKVCEETFIPGQSLKRRQKTYNKEKLYDFTDGRDAFMQSSELSEHQKIHSRKNLFEGRGYEKSVIHSGPFTESQKSHTITRPLESDEDEKAFTISSNPYENQKIPTKENVYEAKSYERSVIHSLASVEAQKSHSVAGPSKPKVMAESTIQSFDAINHQRVRAGGNTSEGREYNRSVIHSLVASKPPRSHNGNELVESNEKGESSIYISDLNDKRQKIPARENPCEGGSKNRNYEDSVIQSVSRAKPQKSVPGEGSGEFKKDGEFSVPSSNVREYQKARAKKKYIEHRSNETSVIHSLPFGEQTFRPRGMLYECQECGECFAHSSDLTEHQKIHDREKPSGSRNYEWSVIRSLAPTDPQTSYAQEQYAKEQARNKCKEFRQFFATSEDLNTNQKIYDQEKSHGEESQGENTDGEETHSEETHGQETIEDPVIQSSDMEDPQKDDPDDKIYECEDCGLGFVDLTDLTDHQKVHSRKCLVDSREYTHSVIHTHSISEYQRDYTGEQLYECPKCGESFIHSSFLFEHQRIHEQDQLYSMKGCDDGFIALLPMKPRRNRAAERNPALAGSAIRCLLCGQGFIHSSALNEHMRLHREDDLLEQSQMVEEAIIPGLALTEFQRSQTEERLFECAVCGESFVNPAELADHVTVHKNEPYEYGSSYTHTSFLTEPLKGAIPFYECKDCGKSFIHSTVLTKHKELHLEEEEEEDEAAAAAAAAAQEVEANVHVPQVVLRIQGSNVEAAEPEVEAAEPEVEAAEPEVEAAEPNGEAEGPDGEAAEPIGEAGQPNGEAEQPNGDADEPDGAGIEDPEERAEEPEGKAEEPEGDADEPDGVGIEDPEEGEDQEIQVEEPYYDCHECTETFTSSTAFGEHLKTHASMIIFEPADAFGECSGYIERASTSTGGANQADEKYFKCDVCGQLFNDRLSLARHQNTHTG.

One can recognise an SCAN box domain in the interval 46–128 (HQRFRNLIYV…TLLENYKEMY (83 aa)). 3 disordered regions span residues 128–230 (YQPE…ESYQ), 266–306 (DGHS…RRGI), and 319–349 (KFIK…MSDD). Over residues 129–142 (QPEDDNNSDVTSDD) the composition is skewed to acidic residues. Composition is skewed to basic and acidic residues over residues 143–152 (DMTRNRRESS), 161–182 (SGDR…DRWS), 206–225 (FEMD…RSQD), and 295–306 (PEAKKSTHRRGI). 3 consecutive C2H2-type zinc fingers follow at residues 454–476 (YVCD…QIMH), 507–529 (FECK…RKIH), and 565–587 (YECR…QKIH). Basic and acidic residues predominate over residues 588–607 (FGDDKDNEREHERERERGET). The segment at 588–610 (FGDDKDNEREHERERERGETFRP) is disordered. The C2H2-type 4 zinc finger occupies 627-649 (YECKVCGETFLHSSSLKEHQKIH). A disordered region spans residues 838-930 (LVASKPPRSH…EFSVPSSNVR (93 aa)). A compositionally biased stretch (basic and acidic residues) spans 868-881 (LNDKRQKIPARENP). The segment at 969 to 991 (YECQECGECFAHSSDLTEHQKIH) adopts a C2H2-type 5 zinc-finger fold. The interval 1056 to 1104 (EKSHGEESQGENTDGEETHSEETHGQETIEDPVIQSSDMEDPQKDDPDD) is disordered. The span at 1071–1082 (EETHSEETHGQE) shows a compositional bias: basic and acidic residues. C2H2-type zinc fingers lie at residues 1107 to 1129 (YECE…QKVH), 1163 to 1185 (YECP…QRIH), 1225 to 1247 (IRCL…MRLH), 1282 to 1304 (FECA…VTVH), and 1332 to 1354 (YECK…KELH). Over residues 1396-1416 (AEPEVEAAEPEVEAAEPEVEA) the composition is skewed to acidic residues. Residues 1396-1496 (AEPEVEAAEP…GIEDPEEGED (101 aa)) form a disordered region. Tandem repeats lie at residues 1398–1404 (PEVEAAE), 1405–1411 (PEVEAAE), 1412–1418 (PEVEAAE), 1419–1423 (PNGEA), 1426–1430 (PDGEA), 1433–1437 (PIGEA), and 1440–1444 (PNGEA). The 3 X 7 AA repeat of P-E-V-E-A-A-E stretch occupies residues 1398–1418 (PEVEAAEPEVEAAEPEVEAAE). Residues 1419–1444 (PNGEAEGPDGEAAEPIGEAGQPNGEA) are 4 X 5 AA repeat of P-X-G-E-A. Acidic residues-rich tracts occupy residues 1450-1467 (DADE…ERAE) and 1476-1496 (PEGD…EGED). C2H2-type zinc fingers lie at residues 1506–1528 (YDCH…LKTH) and 1565–1587 (FKCD…QNTH).

This sequence belongs to the krueppel C2H2-type zinc-finger protein family. Homodimer. Interacts with SIAH1A and SIAH2. Interacts with TRAF2.

The protein resides in the nucleus. It localises to the cytoplasm. Functionally, induces apoptosis in cooperation with SIAH1A. Acts as a mediator between p53/TP53 and BAX in a neuronal death pathway that is activated by DNA damage. Acts synergistically with TRAF2 and inhibits TNF induced apoptosis through activation of NF-kappa-B. This Gorilla gorilla gorilla (Western lowland gorilla) protein is Paternally-expressed gene 3 protein (PEG3).